The chain runs to 933 residues: Collagen alpha-2(I) chain (933 aa).

Over residues Ser1–Gly16 the composition is skewed to gly residues. Disordered regions lie at residues Ser1 to Ala191 and Leu206 to Arg933. Low complexity predominate over residues Leu17–Ala53. Pro24 and Pro30 each carry 4-hydroxyproline. Residues Lys57–Glu72 show a composition bias toward basic and acidic residues. Lys94 carries the 5-hydroxylysine; alternate modification. Lys94 carries an O-linked (Gal...) hydroxylysine; alternate glycan. Composition is skewed to low complexity over residues Val108–Pro137, Ala162–Pro176, and Pro213–Val228. Residues Gly280–Gly289 show a composition bias toward gly residues. Pro317 and Pro320 each carry 4-hydroxyproline. Residues Gly413–Gly422 are compositionally biased toward gly residues. Composition is skewed to low complexity over residues Pro468–Pro485 and Glu497–Ala507. A compositionally biased stretch (gly residues) spans Gly508–Gly517. Low complexity-rich tracts occupy residues Val540–Ser584, Val591–Ala611, and Pro627–Asn640. Gly residues predominate over residues Gly644 to Gly656. The span at Leu657–Thr667 shows a compositional bias: low complexity. The segment covering Gly704 to Gly713 has biased composition (gly residues). Low complexity-rich tracts occupy residues Ser721–Pro748 and Leu756–Ser781. Residues Ala795–Arg807 show a composition bias toward basic and acidic residues. 2 stretches are compositionally biased toward low complexity: residues Tyr809–Ala831 and Pro840–Pro860. Over residues Arg864–Pro874 the composition is skewed to basic and acidic residues.

This sequence belongs to the fibrillar collagen family. As to quaternary structure, trimers of one alpha 2(I) and two alpha 1(I) chains. Interacts (via C-terminus) with TMEM131 (via PapD-L domain); the interaction is direct and is involved in assembly and TRAPPIII ER-to-Golgi transport complex-dependent secretion of collagen. Post-translationally, prolines at the third position of the tripeptide repeating unit (G-X-Y) are hydroxylated in some or all of the chains. As to expression, expressed in bones.

It localises to the secreted. Its subcellular location is the extracellular space. The protein localises to the extracellular matrix. Its function is as follows. Type I collagen is a member of group I collagen (fibrillar forming collagen). This chain is Collagen alpha-2(I) chain, found in Glyptodon sp. (strain SLP-2019) (Giant armadillo).